A 103-amino-acid chain; its full sequence is MYAIIKTGGKQYKVAEGDSVFVEKLDAEEGSSVTFDEVILVANGDDVKVGTPLVDGAKVTAKVEKQGKEKKVVTFKYKPKKHSHSKYGHRQPYTKVTVEKIEA.

Belongs to the bacterial ribosomal protein bL21 family. Part of the 50S ribosomal subunit. Contacts protein L20.

This protein binds to 23S rRNA in the presence of protein L20. The sequence is that of Large ribosomal subunit protein bL21 from Lactobacillus helveticus (strain DPC 4571).